The following is a 494-amino-acid chain: Succinoglycan biosynthesis transport protein ExoT (494 aa).

13 helical membrane passes run 16–36 (WSVL…PILA), 44–64 (FGAV…GGAG), 82–102 (SVFW…FVFA), 105–125 (LATL…SLLI), 157–177 (LGAV…SLLA), 215–235 (FGMM…MVVI), 253–273 (FASI…FPTF), 297–317 (LLAP…LVLF), 321–341 (WAYA…LTPC), 343–363 (TFIP…WALI), 384–404 (AMIW…WVVF), 421–441 (PMIA…HFGA), and 447–467 (VLQL…LILL).

The protein belongs to the polysaccharide synthase family.

Its subcellular location is the cell membrane. It functions in the pathway glycan metabolism; exopolysaccharide biosynthesis. The chain is Succinoglycan biosynthesis transport protein ExoT (exoT) from Rhizobium meliloti (strain 1021) (Ensifer meliloti).